Consider the following 126-residue polypeptide: Putative gene 48 protein (126 aa).

This chain is Putative gene 48 protein (48), found in Bacillus phage SP01 (Bacteriophage SP01).